Consider the following 277-residue polypeptide: Mannosyl-3-phosphoglycerate phosphatase (277 aa).

Asp13 functions as the Nucleophile in the catalytic mechanism. Residues Asp13, Asp15, and Asp219 each coordinate Mg(2+).

This sequence belongs to the HAD-like hydrolase superfamily. MPGP family. Requires Mg(2+) as cofactor.

The protein localises to the cytoplasm. The enzyme catalyses 2-O-(alpha-D-mannosyl)-3-phosphoglycerate + H2O = (2R)-2-O-(alpha-D-mannosyl)-glycerate + phosphate. Its pathway is carbohydrate biosynthesis; 2-(alpha-D-mannosyl)-D-glycerate biosynthesis; 2-(alpha-D-mannosyl)-D-glycerate from GDP-alpha-D-mannose (MPG route): step 2/2. Its function is as follows. Hydrolyzes mannosyl-3-phosphoglycerate (MPG) to form the osmolyte mannosylglycerate (MG). This Aeropyrum pernix (strain ATCC 700893 / DSM 11879 / JCM 9820 / NBRC 100138 / K1) protein is Mannosyl-3-phosphoglycerate phosphatase.